We begin with the raw amino-acid sequence, 292 residues long: Phosphoribulokinase 2 (292 aa).

G12–T20 is an ATP binding site.

This sequence belongs to the phosphoribulokinase family.

The catalysed reaction is D-ribulose 5-phosphate + ATP = D-ribulose 1,5-bisphosphate + ADP + H(+). The protein operates within carbohydrate biosynthesis; Calvin cycle. In Cereibacter sphaeroides (Rhodobacter sphaeroides), this protein is Phosphoribulokinase 2 (prkB).